The following is a 618-amino-acid chain: 2-succinyl-5-enolpyruvyl-6-hydroxy-3-cyclohexene-1-carboxylate synthase (618 aa).

Residues 192–215 are disordered; that stretch reads DPVAERGRDGPYVDVTPGSPEPGD.

This sequence belongs to the TPP enzyme family. MenD subfamily. In terms of assembly, homodimer. Mg(2+) serves as cofactor. It depends on Mn(2+) as a cofactor. Requires thiamine diphosphate as cofactor.

It carries out the reaction isochorismate + 2-oxoglutarate + H(+) = 5-enolpyruvoyl-6-hydroxy-2-succinyl-cyclohex-3-ene-1-carboxylate + CO2. Its pathway is quinol/quinone metabolism; 1,4-dihydroxy-2-naphthoate biosynthesis; 1,4-dihydroxy-2-naphthoate from chorismate: step 2/7. The protein operates within quinol/quinone metabolism; menaquinone biosynthesis. Functionally, catalyzes the thiamine diphosphate-dependent decarboxylation of 2-oxoglutarate and the subsequent addition of the resulting succinic semialdehyde-thiamine pyrophosphate anion to isochorismate to yield 2-succinyl-5-enolpyruvyl-6-hydroxy-3-cyclohexene-1-carboxylate (SEPHCHC). This chain is 2-succinyl-5-enolpyruvyl-6-hydroxy-3-cyclohexene-1-carboxylate synthase, found in Halorubrum lacusprofundi (strain ATCC 49239 / DSM 5036 / JCM 8891 / ACAM 34).